Consider the following 362-residue polypeptide: Peptide chain release factor 1 (362 aa).

Residue Q235 is modified to N5-methylglutamine.

It belongs to the prokaryotic/mitochondrial release factor family. Methylated by PrmC. Methylation increases the termination efficiency of RF1.

Its subcellular location is the cytoplasm. Functionally, peptide chain release factor 1 directs the termination of translation in response to the peptide chain termination codons UAG and UAA. This Variovorax paradoxus (strain S110) protein is Peptide chain release factor 1.